The following is a 210-amino-acid chain: MKKVALLDYGSGNLRSAQRALERVGAEVEVTNDPDVVLAADGLLVPGVGAFDACMKGLKAVQGDRMIGQRLAGGRPVMGICVGMQIMFDSGNEHGISAAGCGQWPGNVEKLEARVLPHMGWNTVEAAQDSQLFAGLDADTRFYFVHSYGVRWWEFEGDGLTRAPLVTWAQHESDRFVAAVENGALMATQFHPEKSGDAGAQLLRNWIDLL.

A Glutamine amidotransferase type-1 domain is found at 3 to 210 (KVALLDYGSG…QLLRNWIDLL (208 aa)). Cys81 (nucleophile) is an active-site residue. Active-site residues include His191 and Glu193.

Heterodimer of HisH and HisF.

The protein resides in the cytoplasm. The enzyme catalyses 5-[(5-phospho-1-deoxy-D-ribulos-1-ylimino)methylamino]-1-(5-phospho-beta-D-ribosyl)imidazole-4-carboxamide + L-glutamine = D-erythro-1-(imidazol-4-yl)glycerol 3-phosphate + 5-amino-1-(5-phospho-beta-D-ribosyl)imidazole-4-carboxamide + L-glutamate + H(+). It carries out the reaction L-glutamine + H2O = L-glutamate + NH4(+). It functions in the pathway amino-acid biosynthesis; L-histidine biosynthesis; L-histidine from 5-phospho-alpha-D-ribose 1-diphosphate: step 5/9. In terms of biological role, IGPS catalyzes the conversion of PRFAR and glutamine to IGP, AICAR and glutamate. The HisH subunit catalyzes the hydrolysis of glutamine to glutamate and ammonia as part of the synthesis of IGP and AICAR. The resulting ammonia molecule is channeled to the active site of HisF. This is Imidazole glycerol phosphate synthase subunit HisH from Corynebacterium diphtheriae (strain ATCC 700971 / NCTC 13129 / Biotype gravis).